Consider the following 434-residue polypeptide: Alpha-enolase (434 aa).

A Mg(2+)-binding site is contributed by Ser40. Substrate contacts are provided by His158 and Glu167. The Proton donor role is filled by Glu210. The Mg(2+) site is built by Asp245, Glu293, and Asp318. The substrate site is built by Glu293 and Asp318. Catalysis depends on Lys343, which acts as the Proton acceptor. Substrate-binding positions include 370–373 (SHRS) and Lys394.

It belongs to the enolase family. As to quaternary structure, homodimer. Requires Mg(2+) as cofactor.

Its subcellular location is the cytoplasm. The catalysed reaction is (2R)-2-phosphoglycerate = phosphoenolpyruvate + H2O. It participates in carbohydrate degradation; glycolysis; pyruvate from D-glyceraldehyde 3-phosphate: step 4/5. In Python regius (Ball python), this protein is Alpha-enolase.